The chain runs to 496 residues: Gamma-aminobutyric acid receptor subunit beta-like (496 aa).

The or 27 signal peptide spans methionine 1–alanine 20. Over glutamine 21–tyrosine 258 the chain is Extracellular. Residues asparagine 39 and asparagine 189 are each glycosylated (N-linked (GlcNAc...) asparagine). An intrachain disulfide couples cysteine 176 to cysteine 190. 3 consecutive transmembrane segments (helical) span residues phenylalanine 259 to isoleucine 280, threonine 285 to valine 306, and alanine 318 to tyrosine 342. Topologically, residues threonine 343–lysine 472 are cytoplasmic. The chain crosses the membrane as a helical span at residues tyrosine 473–isoleucine 494.

It belongs to the ligand-gated ion channel (TC 1.A.9) family. Gamma-aminobutyric acid receptor (TC 1.A.9.5) subfamily. Generally pentameric. There are five types of GABA(A) receptor chains: alpha, beta, gamma, delta, and rho. Interacts with Grd (alpha chain).

It is found in the postsynaptic cell membrane. The protein resides in the cell membrane. Functionally, GABA, an inhibitory neurotransmitter, mediates neuronal inhibition by binding to the GABA receptor and opening an integral chloride channel. Combines with the ligand-gated ion channel subunit GRD to form cation-selective GABA-gated ion channels when coexpressed in Xenopus laevis oocytes. This Drosophila melanogaster (Fruit fly) protein is Gamma-aminobutyric acid receptor subunit beta-like (Lcch3).